A 266-amino-acid chain; its full sequence is Protein crossbronx-like (266 aa).

A UBC core domain is found at 15-178; that stretch reads KQGYHILAEY…VQEQAILSRN (164 aa). The disordered stretch occupies residues 226-266; it reads SEYLGHIDSSRQMDEEETNQLEKLHRGRIPEPQREEAEVSL. Positions 245-266 are enriched in basic and acidic residues; sequence QLEKLHRGRIPEPQREEAEVSL.

It belongs to the ubiquitin-conjugating enzyme family. FTS subfamily.

This is Protein crossbronx-like from Drosophila sechellia (Fruit fly).